Here is a 463-residue protein sequence, read N- to C-terminus: Putative WAS protein family homolog 3 (463 aa).

A required for WASH complex assembly region spans residues 1–54 (MTPVRMQHSLAGQTYAVPLIQPDLRREEAVQQMADALQYLQKVSGDIFSRISQQ). Residues 1-165 (MTPVRMQHSL…EGLGGLPSNI (165 aa)) form a WHD1 region. Lysine 218 is covalently cross-linked (Glycyl lysine isopeptide (Lys-Gly) (interchain with G-Cter in ubiquitin)). Positions 295-463 (QDGVLTPPPP…AEEDEDDWES (169 aa)) are disordered. Over residues 300–312 (TPPPPPPPPPPAP) the composition is skewed to pro residues. Positions 347 to 463 (QGAPREVVDP…AEEDEDDWES (117 aa)) are VCA. Residues 359 to 381 (GRATLLESIRQAGGIGKAKLRSM) form the WH2 domain. Residues 380–396 (SMKERKLEKKQQKEQEQ) show a composition bias toward basic and acidic residues. The segment covering 422–434 (SGKGPGAGEGPGG) has biased composition (gly residues). Positions 454–463 (AEEDEDDWES) are enriched in acidic residues.

Belongs to the WASH1 family. Component of the WASH core complex also described as WASH regulatory complex (SHRC) composed of WASH (WASHC1, WASH2P or WASH3P), WASHC2 (WASHC2A or WASHC2C), WASHC3, WASHC4 and WASHC5. The WASH core complex associates with the F-actin-capping protein dimer (formed by CAPZA1, CAPZA2 or CAPZA3 and CAPZB) in a transient or substoichiometric manner which was initially described as WASH complex. Interacts (via WHD1 region) with WASHC2C; the interaction is direct. Interacts with alpha-tubulin. Interacts with BECN1; WASHC1 and AMBRA1 can competitively interact with BECN1. Interacts with BLOC1S2; may associate with the BLOC-1 complex. Interacts with tubulin gamma chain (TUBG1 or TUBG2). Interacts with EXOC1, EXOC4, EXOC8; in MMP14-positive endosomes in breast tumor cells; indicative for an association with the exocyst complex.

The protein resides in the early endosome. It is found in the early endosome membrane. It localises to the recycling endosome membrane. The protein localises to the cell projection. Its subcellular location is the lamellipodium. The protein resides in the filopodium. It is found in the cytoplasmic vesicle. It localises to the autophagosome. The protein localises to the cytoplasm. Its subcellular location is the cytoskeleton. The protein resides in the microtubule organizing center. It is found in the centrosome. It localises to the centriole. Acts as a nucleation-promoting factor at the surface of endosomes, where it recruits and activates the Arp2/3 complex to induce actin polymerization, playing a key role in the fission of tubules that serve as transport intermediates during endosome sorting. Involved in endocytic trafficking of EGF. Involved in transferrin receptor recycling. Regulates the trafficking of endosomal alpha5beta1 integrin to the plasma membrane and involved in invasive cell migration. In T-cells involved in endosome-to-membrane recycling of receptors including T-cell receptor (TCR), CD28 and ITGAL; proposed to be implicated in T cell proliferation and effector function. In dendritic cells involved in endosome-to-membrane recycling of major histocompatibility complex (MHC) class II probably involving retromer and subsequently allowing antigen sampling, loading and presentation during T-cell activation. Involved in Arp2/3 complex-dependent actin assembly driving Salmonella typhimurium invasion independent of ruffling. Involved in the exocytosis of MMP14 leading to matrix remodeling during invasive migration and implicating late endosome-to-plasma membrane tubular connections and cooperation with the exocyst complex. Involved in negative regulation of autophagy independently from its role in endosomal sorting by inhibiting BECN1 ubiquitination to inactivate PIK3C3/Vps34 activity. The protein is Putative WAS protein family homolog 3 (WASH3P) of Homo sapiens (Human).